A 368-amino-acid polypeptide reads, in one-letter code: Flap endonuclease 1 (368 aa).

The tract at residues 1–104 is N-domain; it reads MGIHDLSKVI…GELLKRGARR (104 aa). Asp-34 provides a ligand contact to Mg(2+). DNA contacts are provided by Arg-47 and Arg-70. Asp-86 lines the Mg(2+) pocket. Residues 103–123 form a disordered region; the sequence is RRKEAQANLEEATEQGDTEQM. The interval 122–251 is I-domain; sequence QMEKFSRRLV…QKAYQLIKEH (130 aa). Residues Glu-158, Glu-160, Asp-179, and Asp-181 each coordinate Mg(2+). Glu-158 contacts DNA. The DNA site is built by Gly-229 and Asp-231. Mg(2+) is bound at residue Asp-231. Residues 334-342 are interaction with PCNA; it reads QQGRLDSFF.

The protein belongs to the XPG/RAD2 endonuclease family. FEN1 subfamily. Interacts with PCNA. Three molecules of FEN1 bind to one PCNA trimer with each molecule binding to one PCNA monomer. PCNA stimulates the nuclease activity without altering cleavage specificity. The cofactor is Mg(2+). Phosphorylated. Phosphorylation upon DNA damage induces relocalization to the nuclear plasma.

Its subcellular location is the nucleus. The protein resides in the nucleolus. It localises to the nucleoplasm. The protein localises to the mitochondrion. Structure-specific nuclease with 5'-flap endonuclease and 5'-3' exonuclease activities involved in DNA replication and repair. During DNA replication, cleaves the 5'-overhanging flap structure that is generated by displacement synthesis when DNA polymerase encounters the 5'-end of a downstream Okazaki fragment. It enters the flap from the 5'-end and then tracks to cleave the flap base, leaving a nick for ligation. Also involved in the long patch base excision repair (LP-BER) pathway, by cleaving within the apurinic/apyrimidinic (AP) site-terminated flap. Acts as a genome stabilization factor that prevents flaps from equilibrating into structures that lead to duplications and deletions. Also possesses 5'-3' exonuclease activity on nicked or gapped double-stranded DNA, and exhibits RNase H activity. Also involved in replication and repair of rDNA and in repairing mitochondrial DNA. In Monosiga brevicollis (Choanoflagellate), this protein is Flap endonuclease 1.